The chain runs to 174 residues: ATP-dependent protease subunit HslV (174 aa).

The active site involves Thr-2. The Na(+) site is built by Gly-157, Cys-160, and Thr-163.

It belongs to the peptidase T1B family. HslV subfamily. As to quaternary structure, a double ring-shaped homohexamer of HslV is capped on each side by a ring-shaped HslU homohexamer. The assembly of the HslU/HslV complex is dependent on binding of ATP.

It localises to the cytoplasm. The catalysed reaction is ATP-dependent cleavage of peptide bonds with broad specificity.. Allosterically activated by HslU binding. Functionally, protease subunit of a proteasome-like degradation complex believed to be a general protein degrading machinery. This Shewanella pealeana (strain ATCC 700345 / ANG-SQ1) protein is ATP-dependent protease subunit HslV.